The following is an 885-amino-acid chain: Alanine--tRNA ligase (885 aa).

Residues His569, His573, Cys672, and His676 each coordinate Zn(2+).

Belongs to the class-II aminoacyl-tRNA synthetase family. Zn(2+) is required as a cofactor.

The protein resides in the cytoplasm. It carries out the reaction tRNA(Ala) + L-alanine + ATP = L-alanyl-tRNA(Ala) + AMP + diphosphate. Its function is as follows. Catalyzes the attachment of alanine to tRNA(Ala) in a two-step reaction: alanine is first activated by ATP to form Ala-AMP and then transferred to the acceptor end of tRNA(Ala). Also edits incorrectly charged Ser-tRNA(Ala) and Gly-tRNA(Ala) via its editing domain. This is Alanine--tRNA ligase from Chlorobaculum tepidum (strain ATCC 49652 / DSM 12025 / NBRC 103806 / TLS) (Chlorobium tepidum).